Consider the following 304-residue polypeptide: Aspartate carbamoyltransferase catalytic subunit (304 aa).

Carbamoyl phosphate is bound by residues Arg49 and Thr50. Lys77 lines the L-aspartate pocket. Arg99, His127, and Gln130 together coordinate carbamoyl phosphate. L-aspartate contacts are provided by Arg160 and Arg211. Ala252 and Pro253 together coordinate carbamoyl phosphate.

The protein belongs to the aspartate/ornithine carbamoyltransferase superfamily. ATCase family. Heterododecamer (2C3:3R2) of six catalytic PyrB chains organized as two trimers (C3), and six regulatory PyrI chains organized as three dimers (R2).

The catalysed reaction is carbamoyl phosphate + L-aspartate = N-carbamoyl-L-aspartate + phosphate + H(+). Its pathway is pyrimidine metabolism; UMP biosynthesis via de novo pathway; (S)-dihydroorotate from bicarbonate: step 2/3. Its function is as follows. Catalyzes the condensation of carbamoyl phosphate and aspartate to form carbamoyl aspartate and inorganic phosphate, the committed step in the de novo pyrimidine nucleotide biosynthesis pathway. This Bacillus cereus (strain ZK / E33L) protein is Aspartate carbamoyltransferase catalytic subunit.